The chain runs to 605 residues: NADH-ubiquinone oxidoreductase chain 5 (605 aa).

16 consecutive transmembrane segments (helical) span residues 11–31 (ILIT…LPPI), 49–69 (LSLT…ISSL), 77–97 (LAMS…ALFI), 120–140 (MFLL…NFFP), 141–161 (MLVG…WWHG), 178–198 (LADI…SSLD), 202–222 (FFAT…MAAM), 244–264 (VSAL…LIGM), 273–295 (GFSE…KALL), 302–322 (IIAF…GLNH), 325–345 (LAFM…LCAG), 371–391 (ASCF…TGFF), 408–425 (LWAT…IYSL), 457–477 (LALA…PIYT), 488–508 (LAAL…ISLA), and 584–604 (IKTY…IMLF).

This sequence belongs to the complex I subunit 5 family.

It localises to the mitochondrion inner membrane. The catalysed reaction is a ubiquinone + NADH + 5 H(+)(in) = a ubiquinol + NAD(+) + 4 H(+)(out). Functionally, core subunit of the mitochondrial membrane respiratory chain NADH dehydrogenase (Complex I) that is believed to belong to the minimal assembly required for catalysis. Complex I functions in the transfer of electrons from NADH to the respiratory chain. The immediate electron acceptor for the enzyme is believed to be ubiquinone. This chain is NADH-ubiquinone oxidoreductase chain 5 (MT-ND5), found in Pelomedusa subrufa (African side-necked turtle).